Reading from the N-terminus, the 178-residue chain is 3-hydroxyacyl-[acyl-carrier-protein] dehydratase FabZ (178 aa).

Residue His-54 is part of the active site.

It belongs to the thioester dehydratase family. FabZ subfamily.

The protein localises to the cytoplasm. It catalyses the reaction a (3R)-hydroxyacyl-[ACP] = a (2E)-enoyl-[ACP] + H2O. Functionally, involved in unsaturated fatty acids biosynthesis. Catalyzes the dehydration of short chain beta-hydroxyacyl-ACPs and long chain saturated and unsaturated beta-hydroxyacyl-ACPs. This is 3-hydroxyacyl-[acyl-carrier-protein] dehydratase FabZ from Yersinia enterocolitica.